The chain runs to 407 residues: Phosphopentomutase (407 aa).

6 residues coordinate Mn(2+): Asp-10, Asp-306, His-311, Asp-347, His-348, and His-359.

Belongs to the phosphopentomutase family. Mn(2+) is required as a cofactor.

The protein resides in the cytoplasm. The enzyme catalyses 2-deoxy-alpha-D-ribose 1-phosphate = 2-deoxy-D-ribose 5-phosphate. It catalyses the reaction alpha-D-ribose 1-phosphate = D-ribose 5-phosphate. Its pathway is carbohydrate degradation; 2-deoxy-D-ribose 1-phosphate degradation; D-glyceraldehyde 3-phosphate and acetaldehyde from 2-deoxy-alpha-D-ribose 1-phosphate: step 1/2. Functionally, isomerase that catalyzes the conversion of deoxy-ribose 1-phosphate (dRib-1-P) and ribose 1-phosphate (Rib-1-P) to deoxy-ribose 5-phosphate (dRib-5-P) and ribose 5-phosphate (Rib-5-P), respectively. This is Phosphopentomutase from Salmonella schwarzengrund (strain CVM19633).